A 240-amino-acid polypeptide reads, in one-letter code: tRNA (guanine-N(7)-)-methyltransferase (240 aa).

Positions 1 to 20 are disordered; that stretch reads MTESHDTPITSDGEARPHRR. S-adenosyl-L-methionine is bound by residues Glu-70, Glu-95, Asp-122, and Asp-145. Residue Asp-145 is part of the active site. Substrate-binding positions include Lys-149, Asp-181, and 218-221; that span reads TKFE.

This sequence belongs to the class I-like SAM-binding methyltransferase superfamily. TrmB family.

The catalysed reaction is guanosine(46) in tRNA + S-adenosyl-L-methionine = N(7)-methylguanosine(46) in tRNA + S-adenosyl-L-homocysteine. It participates in tRNA modification; N(7)-methylguanine-tRNA biosynthesis. Functionally, catalyzes the formation of N(7)-methylguanine at position 46 (m7G46) in tRNA. The protein is tRNA (guanine-N(7)-)-methyltransferase of Pseudomonas putida (strain ATCC 700007 / DSM 6899 / JCM 31910 / BCRC 17059 / LMG 24140 / F1).